The following is a 657-amino-acid chain: Glycogen debranching enzyme (657 aa).

The active-site Nucleophile is the D336. The active-site Proton donor is the E371. The segment at A460 to K479 is disordered.

The protein belongs to the glycosyl hydrolase 13 family.

The enzyme catalyses Hydrolysis of (1-&gt;6)-alpha-D-glucosidic linkages to branches with degrees of polymerization of three or four glucose residues in limit dextrin.. It participates in glycan degradation; glycogen degradation. Functionally, removes maltotriose and maltotetraose chains that are attached by 1,6-alpha-linkage to the limit dextrin main chain, generating a debranched limit dextrin. The sequence is that of Glycogen debranching enzyme from Escherichia coli (strain SMS-3-5 / SECEC).